Here is an 85-residue protein sequence, read N- to C-terminus: Large ribosomal subunit protein bL27 (85 aa).

Residues 1–13 (MAKTKSGGSTSNG) show a composition bias toward polar residues. The interval 1–26 (MAKTKSGGSTSNGRDSKGRRLGQKLG) is disordered.

This sequence belongs to the bacterial ribosomal protein bL27 family.

The protein is Large ribosomal subunit protein bL27 of Mycoplasma mobile (strain ATCC 43663 / 163K / NCTC 11711) (Mesomycoplasma mobile).